The primary structure comprises 763 residues: Disintegrin and metalloproteinase domain-containing protein 29 (763 aa).

A signal peptide spans 1-31 (MNMIEALLSMRVLFLTQVFGIFLCFPGLTKA). Residues 32–200 (GHLHYHSSIE…ILKQSSFEDW (169 aa)) constitute a propeptide that is removed on maturation. N-linked (GlcNAc...) asparagine glycosylation is found at N164, N177, and N223. Over 201–684 (WTHTKIVELV…KTNKKKHFFY (484 aa)) the chain is Extracellular. One can recognise a Peptidase M12B domain in the interval 205–396 (KIVELVVVVD…NTRCLMENMY (192 aa)). Intrachain disulfides connect C313–C390, C353–C375, and C355–C360. N-linked (GlcNAc...) asparagine glycans are attached at residues N374, N424, N434, N475, and N584. In terms of domain architecture, Disintegrin spans 403–489 (RTRCGNGVVE…ECPDDAYVED (87 aa)). C461 and C481 are disulfide-bonded. Intrachain disulfides connect C631–C642, C636–C648, and C650–C659. Residues 631–660 (CTPAFCNYRGICNNKHHCHCNFHWDPPNCM) form the EGF-like domain. The helical transmembrane segment at 685–705 (LLLLQLIILACLLSCLLWLLF) threads the bilayer. Over 706 to 763 (NIKGSKRKPQVQPTPVKTKKVSKKVPSQKPSPVPSPSLPQLRMPSRSASPTSSIKSTN) the chain is Cytoplasmic. The disordered stretch occupies residues 712 to 763 (RKPQVQPTPVKTKKVSKKVPSQKPSPVPSPSLPQLRMPSRSASPTSSIKSTN). Polar residues predominate over residues 751 to 763 (RSASPTSSIKSTN).

The protein localises to the membrane. Its function is as follows. May be involved in spermatogenesis and fertilization. Seems to be a non catalytic metalloprotease-like protein. This is Disintegrin and metalloproteinase domain-containing protein 29 (Adam29) from Mus musculus (Mouse).